Consider the following 939-residue polypeptide: MREETRQIFLQTIDSDAGKRSIAEAMLMDLEKQPGFVMSLPHTCMKDGDPIVKRVAAIYFKNAIIKQWRSNEYSEARKYLVENILDLFLYGDEVTRTAYNAILVNIFNNEKLSDLDGMFRKAAGFMRTSEANHVLTALNMYERVFDAEKIKYNLEQVLGLMFDTAGKDILEKVYGFLESGNYGMVKTGMIVLSKSYCYYSIPDFLSAIGTFSYVFNLSLRILNLEGSNEDLLESKKWAAYFMYKSCSKGIKKFYKKSELSEYITDMNRFQMVYATFLKIIQERSQQTIDIELYAIDFFVLLTSDADFFRYMEPNLSYFISGYILPLYSLSDSEEDDFENDPDKYLREKYNFFGNGLRSSLNTLFCEIISKVKQKEETFQGIISYLLSILGGSKETPSRDNIRAAYGSFFLLASIKSTLMKKARNVLEYIVANHVIPALRGNSCILKSQACYFLSTIEEDLPINGLALEALDNTHKLMKSSHRALMVESTLAMSFFLFNEASSEKFRQLIPETVESILSLSNTYNLEPLTMLLDSIIGYYPEEISKYAPELVGSISRITLSHLMNESDVGEDKQMVVSGFLRSIESLILSLDQRSLVLKYSYVNSYDVISFILKEEKSDFYQEALDILNGYVYMIKEIEGSMWGLFQMVLNLPIDEITVYSTEVADLIDNFITYGKTSVMDAGILGSICSVISKLCLCNEENFLDEDFIGGCRIIESIILNIGNELLSKDPSRLPLFISVAISGEKMIDEDGPAIVYALELIMNCFILRPKETIRILREQKYLQSFFEKLFSQKNKFKRVHDKKICMLFIGTICRLQDGALPELDVHGLGEVLVATVTSLPEAIRLRNQMKDDEDAPPPLVNTEDDQCLDASDISCTDILEEDIYFETELDKFEPFGYISSILSSPASGTYAEKIISTMTDEQKDSLSTVLNGERIIQKI.

In terms of domain architecture, Importin N-terminal spans 23–90; sequence AEAMLMDLEK…VENILDLFLY (68 aa).

The protein belongs to the importin beta family.

Its subcellular location is the nucleus. It is found in the cytoplasm. Functionally, active in protein import into the nucleus. In Encephalitozoon cuniculi (strain GB-M1) (Microsporidian parasite), this protein is Probable importin ECU10_0620.